The chain runs to 141 residues: Large ribosomal subunit protein uL11 (141 aa).

The protein belongs to the universal ribosomal protein uL11 family. In terms of assembly, part of the ribosomal stalk of the 50S ribosomal subunit. Interacts with L10 and the large rRNA to form the base of the stalk. L10 forms an elongated spine to which L12 dimers bind in a sequential fashion forming a multimeric L10(L12)X complex. Post-translationally, one or more lysine residues are methylated.

Its function is as follows. Forms part of the ribosomal stalk which helps the ribosome interact with GTP-bound translation factors. The polypeptide is Large ribosomal subunit protein uL11 (Lacticaseibacillus casei (strain BL23) (Lactobacillus casei)).